The primary structure comprises 62 residues: Photosystem II reaction center protein Z (62 aa).

Helical transmembrane passes span 8-28 and 41-61; these read AVFA…VVFA and FSGT…NSLI.

Belongs to the PsbZ family. In terms of assembly, PSII is composed of 1 copy each of membrane proteins PsbA, PsbB, PsbC, PsbD, PsbE, PsbF, PsbH, PsbI, PsbJ, PsbK, PsbL, PsbM, PsbT, PsbY, PsbZ, Psb30/Ycf12, at least 3 peripheral proteins of the oxygen-evolving complex and a large number of cofactors. It forms dimeric complexes.

Its subcellular location is the plastid. The protein localises to the chloroplast thylakoid membrane. May control the interaction of photosystem II (PSII) cores with the light-harvesting antenna, regulates electron flow through the 2 photosystem reaction centers. PSII is a light-driven water plastoquinone oxidoreductase, using light energy to abstract electrons from H(2)O, generating a proton gradient subsequently used for ATP formation. This Morus indica (Mulberry) protein is Photosystem II reaction center protein Z.